The chain runs to 316 residues: Adenine deaminase (316 aa).

Zn(2+) is bound by residues histidine 14, histidine 16, and histidine 194. Glutamate 197 functions as the Proton donor in the catalytic mechanism. A Zn(2+)-binding site is contributed by aspartate 275. Aspartate 276 contributes to the substrate binding site.

Belongs to the metallo-dependent hydrolases superfamily. Adenosine and AMP deaminases family. Adenine deaminase type 2 subfamily. Requires Zn(2+) as cofactor.

The enzyme catalyses adenine + H2O + H(+) = hypoxanthine + NH4(+). Its function is as follows. Catalyzes the hydrolytic deamination of adenine to hypoxanthine. Plays an important role in the purine salvage pathway and in nitrogen catabolism. This chain is Adenine deaminase, found in Stutzerimonas stutzeri (strain A1501) (Pseudomonas stutzeri).